A 407-amino-acid polypeptide reads, in one-letter code: Argininosuccinate synthase (407 aa).

ATP is bound by residues 10 to 18 (AYSGGLDTS) and A37. Y88 and S93 together coordinate L-citrulline. G118 lines the ATP pocket. L-aspartate is bound by residues T120, N124, and D125. Residue N124 coordinates L-citrulline. The L-citrulline site is built by R128, S179, S188, E264, and Y276.

The protein belongs to the argininosuccinate synthase family. Type 1 subfamily. As to quaternary structure, homotetramer.

It localises to the cytoplasm. The catalysed reaction is L-citrulline + L-aspartate + ATP = 2-(N(omega)-L-arginino)succinate + AMP + diphosphate + H(+). It participates in amino-acid biosynthesis; L-arginine biosynthesis; L-arginine from L-ornithine and carbamoyl phosphate: step 2/3. In Jannaschia sp. (strain CCS1), this protein is Argininosuccinate synthase.